A 320-amino-acid chain; its full sequence is GPI-specific phospholipase A2-like PGAP3 (320 aa).

A signal peptide spans 1–20 (MAERTARLLLLTVTVGLAWG). The Lumenal portion of the chain corresponds to 21-98 (SQGDREPVYR…QFHGKWPFSR (78 aa)). Asn-40 carries N-linked (GlcNAc...) asparagine glycosylation. A helical transmembrane segment spans residues 99 to 119 (FLFIQEPASAVASLLNGLASL). Over 120 to 135 (VMLCRYRASVPASSPM) the chain is Cytoplasmic. A helical membrane pass occupies residues 136–156 (YHTCMAFAWVSLNAWFWSTVF). Topologically, residues 157 to 169 (HTRDTDLTEKMDY) are lumenal. A helical transmembrane segment spans residues 170–190 (FCASAVILHSIYLCCVRTVGL). Residues 191 to 198 (QHPSVARA) are Cytoplasmic-facing. Residues 199-219 (FGATLLLMLLLHTSYLSLVRF) form a helical membrane-spanning segment. The Lumenal portion of the chain corresponds to 220–223 (DYSY). Residues 224-244 (NMMANVAIGLVNLAWWLAWCL) form a helical membrane-spanning segment. At 245-258 (RNHRRLPHTRKCVA) the chain is on the cytoplasmic side. A helical transmembrane segment spans residues 259–279 (VVLLLQGLSLLELLDFPPLFW). At 280–282 (VLD) the chain is on the lumenal side. A helical transmembrane segment spans residues 283–303 (AHAIWHISTIPVHVLFFRFLE). The Cytoplasmic segment spans residues 304–320 (DDSLYLLKESEAKFKLD).

The protein belongs to the PGAP3 family.

It is found in the golgi apparatus membrane. Functionally, involved in the fatty acid remodeling steps of GPI-anchor maturation where the unsaturated acyl chain at sn-2 of inositol phosphate is replaced by a saturated stearoyl chain. May catalyze the first step of the fatty acid remodeling, by removing the unsaturated acyl chain at sn-2 of inositol phosphate, generating a lyso-GPI intermediate. The fatty acid remodeling steps is critical for the integration of GPI-APs into lipid rafts. The chain is GPI-specific phospholipase A2-like PGAP3 (PGAP3) from Cricetulus griseus (Chinese hamster).